Consider the following 1049-residue polypeptide: Protein argonaute 12 (1049 aa).

The segment covering 1-53 has biased composition (gly residues); that stretch reads MSSRGGGGGGRRGGRGGGGGREGGGGGGGGGGRGGQGRGDLGVVGERQGGGRG. Disordered regions lie at residues 1-101 and 144-192; these read MSSR…GVQV and GGAP…KAVT. A compositionally biased stretch (basic and acidic residues) spans 54–65; it reads AGERGGRHDAPR. Positions 66–76 are enriched in gly residues; the sequence is GRGGVAVGAGA. The segment covering 144-160 has biased composition (low complexity); it reads GGAPPAGQGSSLAAAQG. One can recognise a PAZ domain in the interval 404 to 515; it reads PVMDFAVQYL…LPMEVCSILE (112 aa). In terms of domain architecture, Piwi spans 694 to 1012; the sequence is LLIVILTEIS…GAFRARYYME (319 aa).

The protein belongs to the argonaute family. Ago subfamily.

Its function is as follows. Probably involved in the RNA silencing pathway. May bind to short RNAs such as microRNAs (miRNAs) or short interfering RNAs (siRNAs), and represses the translation of mRNAs which are complementary to them. This Oryza sativa subsp. japonica (Rice) protein is Protein argonaute 12 (AGO12).